We begin with the raw amino-acid sequence, 680 residues long: DNA-directed RNA polymerase subunit beta' (680 aa).

The Zn(2+) site is built by Cys-69, Cys-71, Cys-87, and Cys-90. The Mg(2+) site is built by Asp-489, Asp-491, and Asp-493.

Belongs to the RNA polymerase beta' chain family. RpoC1 subfamily. As to quaternary structure, in plastids the minimal PEP RNA polymerase catalytic core is composed of four subunits: alpha, beta, beta', and beta''. When a (nuclear-encoded) sigma factor is associated with the core the holoenzyme is formed, which can initiate transcription. Mg(2+) is required as a cofactor. The cofactor is Zn(2+).

The protein localises to the plastid. The protein resides in the chloroplast. It catalyses the reaction RNA(n) + a ribonucleoside 5'-triphosphate = RNA(n+1) + diphosphate. DNA-dependent RNA polymerase catalyzes the transcription of DNA into RNA using the four ribonucleoside triphosphates as substrates. The polypeptide is DNA-directed RNA polymerase subunit beta' (Ceratophyllum demersum (Rigid hornwort)).